Here is a 40-residue protein sequence, read N- to C-terminus: Photosystem II reaction center protein J (40 aa).

The chain crosses the membrane as a helical span at residues 8–28 (IPLWIIGTVAGIVVIGLIGLF).

This sequence belongs to the PsbJ family. In terms of assembly, PSII is composed of 1 copy each of membrane proteins PsbA, PsbB, PsbC, PsbD, PsbE, PsbF, PsbH, PsbI, PsbJ, PsbK, PsbL, PsbM, PsbT, PsbX, PsbY, PsbZ, Psb30/Ycf12, at least 3 peripheral proteins of the oxygen-evolving complex and a large number of cofactors. It forms dimeric complexes.

Its subcellular location is the plastid. It is found in the chloroplast thylakoid membrane. In terms of biological role, one of the components of the core complex of photosystem II (PSII). PSII is a light-driven water:plastoquinone oxidoreductase that uses light energy to abstract electrons from H(2)O, generating O(2) and a proton gradient subsequently used for ATP formation. It consists of a core antenna complex that captures photons, and an electron transfer chain that converts photonic excitation into a charge separation. In Pisum sativum (Garden pea), this protein is Photosystem II reaction center protein J.